The sequence spans 221 residues: uncharacterized protein (221 aa).

The CUE domain maps to 20–63; the sequence is DFDRAMLDFQAMFPSLSNSHIEYVLRKYDGDVSATINELLYDNT. Positions 131–194 are disordered; that stretch reads EEKKKKSCSD…GPYIGEGEVK (64 aa). A compositionally biased stretch (low complexity) spans 156-166; sequence KNSKNSKISVN. Positions 169–183 are enriched in basic and acidic residues; it reads KKLEPRRRSDEDRVP.

This is an uncharacterized protein from Caenorhabditis elegans.